A 251-amino-acid polypeptide reads, in one-letter code: tRNA pseudouridine synthase A (251 aa).

Asp56 serves as the catalytic Nucleophile. Tyr110 is a substrate binding site.

The protein belongs to the tRNA pseudouridine synthase TruA family.

It catalyses the reaction uridine(38/39/40) in tRNA = pseudouridine(38/39/40) in tRNA. Formation of pseudouridine at positions 38, 39 and 40 in the anticodon stem and loop of transfer RNAs. The sequence is that of tRNA pseudouridine synthase A from Picrophilus torridus (strain ATCC 700027 / DSM 9790 / JCM 10055 / NBRC 100828 / KAW 2/3).